A 1404-amino-acid chain; its full sequence is DNA-directed RNA polymerase subunit beta' (1404 aa).

Zn(2+) is bound by residues cysteine 70, cysteine 72, cysteine 85, and cysteine 88. Aspartate 460, aspartate 462, and aspartate 464 together coordinate Mg(2+). The Zn(2+) site is built by cysteine 814, cysteine 888, cysteine 895, and cysteine 898.

This sequence belongs to the RNA polymerase beta' chain family. As to quaternary structure, the RNAP catalytic core consists of 2 alpha, 1 beta, 1 beta' and 1 omega subunit. When a sigma factor is associated with the core the holoenzyme is formed, which can initiate transcription. Mg(2+) is required as a cofactor. Requires Zn(2+) as cofactor.

It catalyses the reaction RNA(n) + a ribonucleoside 5'-triphosphate = RNA(n+1) + diphosphate. In terms of biological role, DNA-dependent RNA polymerase catalyzes the transcription of DNA into RNA using the four ribonucleoside triphosphates as substrates. This is DNA-directed RNA polymerase subunit beta' from Shewanella halifaxensis (strain HAW-EB4).